Here is a 445-residue protein sequence, read N- to C-terminus: N-succinylarginine dihydrolase (445 aa).

Substrate is bound by residues 19-28, asparagine 110, and 137-138; these read AGLSFGNVAS and HR. Glutamate 174 is a catalytic residue. Arginine 214 is a binding site for substrate. The active site involves histidine 250. Residues aspartate 252 and asparagine 363 each contribute to the substrate site. The active-site Nucleophile is cysteine 369.

This sequence belongs to the succinylarginine dihydrolase family. In terms of assembly, homodimer.

It carries out the reaction N(2)-succinyl-L-arginine + 2 H2O + 2 H(+) = N(2)-succinyl-L-ornithine + 2 NH4(+) + CO2. It functions in the pathway amino-acid degradation; L-arginine degradation via AST pathway; L-glutamate and succinate from L-arginine: step 2/5. Catalyzes the hydrolysis of N(2)-succinylarginine into N(2)-succinylornithine, ammonia and CO(2). This chain is N-succinylarginine dihydrolase, found in Shewanella sediminis (strain HAW-EB3).